Consider the following 146-residue polypeptide: Large ribosomal subunit protein uL15 (146 aa).

A compositionally biased stretch (basic and acidic residues) spans 1 to 18 (MKLHELKPAEGSRKERNR). The interval 1–54 (MKLHELKPAEGSRKERNRVGRGVATGNGKTSGRGHKGQKARSGGGVRPGFEGGQ) is disordered. Positions 42–52 (SGGGVRPGFEG) are enriched in gly residues.

Belongs to the universal ribosomal protein uL15 family. Part of the 50S ribosomal subunit.

Functionally, binds to the 23S rRNA. The protein is Large ribosomal subunit protein uL15 of Staphylococcus aureus (strain Mu3 / ATCC 700698).